A 432-amino-acid polypeptide reads, in one-letter code: Adenylosuccinate synthetase (432 aa).

Residues 13-19 and 41-43 contribute to the GTP site; these read GDEGKGK and GHT. The active-site Proton acceptor is D14. Mg(2+) is bound by residues D14 and G41. Residues 14–17, 39–42, T130, R144, Q225, T240, and R304 each bind IMP; these read DEGK and NAGH. H42 functions as the Proton donor in the catalytic mechanism. Substrate is bound at residue 300-306; that stretch reads ATTGRRR. GTP-binding positions include R306, 332–334, and 415–417; these read KLD and STG.

Belongs to the adenylosuccinate synthetase family. Homodimer. The cofactor is Mg(2+).

The protein localises to the cytoplasm. It catalyses the reaction IMP + L-aspartate + GTP = N(6)-(1,2-dicarboxyethyl)-AMP + GDP + phosphate + 2 H(+). The protein operates within purine metabolism; AMP biosynthesis via de novo pathway; AMP from IMP: step 1/2. Its function is as follows. Plays an important role in the de novo pathway of purine nucleotide biosynthesis. Catalyzes the first committed step in the biosynthesis of AMP from IMP. This is Adenylosuccinate synthetase from Escherichia coli (strain K12).